Reading from the N-terminus, the 406-residue chain is Tyrosine-protein phosphatase non-receptor type 2 (406 aa).

The region spanning 5–275 (IEREFEELDA…RFSYMAIIEG (271 aa)) is the Tyrosine-protein phosphatase domain. Residue tyrosine 22 is modified to Phosphotyrosine. Position 52 is a phosphoserine (serine 52). Phosphotyrosine is present on tyrosine 68. Residues aspartate 182, 216 to 222 (CSAGIGR), and glutamine 260 each bind substrate. Cysteine 216 (phosphocysteine intermediate) is an active-site residue. Residue cysteine 216 is modified to S-nitrosocysteine. Serine 293, serine 298, serine 304, serine 320, and serine 339 each carry phosphoserine. The tract at residues 341-406 (ESILRKRIRE…ALVGWTLLFH (66 aa)) is endoplasmic reticulum location. The mediates interaction with STX17 stretch occupies residues 371 to 406 (ERKRKRWLYWQPILTKMGFVSVILVGALVGWTLLFH).

This sequence belongs to the protein-tyrosine phosphatase family. Non-receptor class 1 subfamily. Interacts with RMDN3. Isoform 1 interacts with TMED9. Isoform 1 interacts with STX17; dephosphorylates STX17. Interacts with ITGA1 (via cytoplasmic domain); activates the phosphatase activity towards EGFR. Interacts with TRAF2; probably involved in tumor necrosis factor-mediated signaling. Interacts with MET. Interacts with FAM220A and STAT3; interaction with FAM220A promotes interaction of PTPN2 with transcriptional activator STAT3, leading to dephosphorylation of STAT3 by PTPN2 and negative regulation of STAT3 transcriptional activator activity. Specifically phosphorylated in a cell cycle-dependent manner by cyclin-dependent kinases CDK1 and CDK2. Probably activated through phosphorylation by PKR. As to expression, ubiquitously expressed. The highest expression levels were found in ovary, testis, thymus and kidney.

It is found in the endoplasmic reticulum. It localises to the endoplasmic reticulum-Golgi intermediate compartment. The protein localises to the nucleus. Its subcellular location is the cytoplasm. The protein resides in the cell membrane. It catalyses the reaction O-phospho-L-tyrosyl-[protein] + H2O = L-tyrosyl-[protein] + phosphate. Its function is as follows. Non-receptor type tyrosine-specific phosphatase that dephosphorylates receptor protein tyrosine kinases including INSR, EGFR, CSF1R, PDGFR. Also dephosphorylates non-receptor protein tyrosine kinases like JAK1, JAK2, JAK3, Src family kinases, STAT1, STAT3 and STAT6 either in the nucleus or the cytoplasm. Negatively regulates numerous signaling pathways and biological processes like hematopoiesis, inflammatory response, cell proliferation and differentiation, and glucose homeostasis. Plays a multifaceted and important role in the development of the immune system. Functions in T-cell receptor signaling through dephosphorylation of FYN and LCK to control T-cells differentiation and activation. Dephosphorylates CSF1R, negatively regulating its downstream signaling and macrophage differentiation. Negatively regulates cytokine (IL2/interleukin-2 and interferon)-mediated signaling through dephosphorylation of the cytoplasmic kinases JAK1, JAK3 and their substrate STAT1, that propagate signaling downstream of the cytokine receptors. Also regulates the IL6/interleukin-6 and IL4/interleukin-4 cytokine signaling through dephosphorylation of STAT3 and STAT6 respectively. In addition to the immune system, it is involved in anchorage-dependent, negative regulation of EGF-stimulated cell growth. Activated by the integrin ITGA1/ITGB1, it dephosphorylates EGFR and negatively regulates EGF signaling. Dephosphorylates PDGFRB and negatively regulates platelet-derived growth factor receptor-beta signaling pathway and therefore cell proliferation. Negatively regulates tumor necrosis factor-mediated signaling downstream via MAPK through SRC dephosphorylation. May also regulate the hepatocyte growth factor receptor signaling pathway through dephosphorylation of the hepatocyte growth factor receptor MET. Also plays an important role in glucose homeostasis. For instance, negatively regulates the insulin receptor signaling pathway through the dephosphorylation of INSR and control gluconeogenesis and liver glucose production through negative regulation of the IL6 signaling pathways. May also bind DNA. The protein is Tyrosine-protein phosphatase non-receptor type 2 (Ptpn2) of Mus musculus (Mouse).